A 351-amino-acid polypeptide reads, in one-letter code: Transmembrane and coiled-coil domain-containing protein 5B (351 aa).

The stretch at 17 to 214 (EIPKLEITKQ…WRSSIQSAKT (198 aa)) forms a coiled coil. A helical membrane pass occupies residues 292-312 (IFVVMIFFRLLGYVLFYLQYI).

The protein belongs to the TMCO5 family.

The protein localises to the membrane. The chain is Transmembrane and coiled-coil domain-containing protein 5B (TMCO5B) from Bos taurus (Bovine).